The sequence spans 130 residues: MAKLSHEELLSAFEEMTLLELSEFVKLFEEKFDVTAAAPAAVVAAAPAGGGGGEAAVEEEKDEFDVILESAGDKKIQVIKEVRGLTNLGLKDAKDLVDSAPKPVLEGVNKETAEKAKAALEGAGATVTLK.

This sequence belongs to the bacterial ribosomal protein bL12 family. Homodimer. Part of the ribosomal stalk of the 50S ribosomal subunit. Forms a multimeric L10(L12)X complex, where L10 forms an elongated spine to which 2 to 4 L12 dimers bind in a sequential fashion. Binds GTP-bound translation factors.

Forms part of the ribosomal stalk which helps the ribosome interact with GTP-bound translation factors. Is thus essential for accurate translation. The polypeptide is Large ribosomal subunit protein bL12 (Thermobifida fusca (strain YX)).